We begin with the raw amino-acid sequence, 79 residues long: U-actitoxin-Oulsp1 (79 aa).

The first 21 residues, methionine 1 to alanine 21, serve as a signal peptide directing secretion. The propeptide occupies serine 22–arginine 43. Positions cysteine 45 to cysteine 79 constitute a ShKT domain. Cystine bridges form between cysteine 45/cysteine 79, cysteine 54/cysteine 72, and cysteine 63/cysteine 76. The segment at lysine 67–tyrosine 68 is crucial for binding to potassium channels.

This sequence belongs to the sea anemone type 1 potassium channel toxin family. Type 1b subfamily. In terms of processing, two similar peptides (OspTx2a-p1 and -p2) are obtained after synthesis and oxidative folding. They may differ by a D-Cys at position 76 (corresponding to OspTx2a-p2). Since C-terminal Cys residues are prone to racemization during solid-phase peptide synthesis, and if the presence of a D-amino acid is correct, it is probable that OspTx2a-p1 (L-Cys-76 form) corresponds to the native peptide.

It is found in the secreted. In terms of biological role, toxin that weakly blocks the two voltage-gated potassium channels on Kv1.2/KCNA2 (IC(50)=1.8-2.5 uM) and Kv1.6/KCNA6 (IC(50)=5.6-6.2 uM). The polypeptide is U-actitoxin-Oulsp1 (Oulactis sp. (Sea anemone)).